The following is a 79-amino-acid chain: Protein OPG081 (79 aa).

Residues 1 to 8 (MVDAITVL) lie on the Intravirion side of the membrane. Residues 9 to 29 (TAIGITVLMLLMVISGAAMIV) traverse the membrane as a helical segment. The Virion surface portion of the chain corresponds to 30-47 (KELNPNDIFTMQSLKFNR). Residues 48–68 (AVTIFKYIGLFIYIPGTIILY) traverse the membrane as a helical segment. Topologically, residues 69 to 79 (ATYVKSLLMKS) are intravirion.

This sequence belongs to the orthopoxvirus OPG081 family.

The protein resides in the virion membrane. Envelope protein. The chain is Protein OPG081 (OPG081) from Vaccinia virus (strain Copenhagen) (VACV).